An 814-amino-acid polypeptide reads, in one-letter code: MKEFPKHYNFTENEKKWQNIWQELQIYAYDPNISKAEIYIVDTPPPTVSGQLHIGHIYSYTQTDFIVRFQRMIGKNIFYPIGFDDNGLPTERLVEKQKQIKAYNMERDEFIKICLEVVKNEEAKFRSLFKQIALSVDWSLEYQTISPLSRKISQMSFLDLLHKGEVYRANQPILWDTVDGTALAQADIEDKQKISSMNYITFKTEQGDQLTIATTRPELLPACVAVFYHPDDVRYKHLADKSAITPLFNEKVPILADPLVQQDKGTGLVMCCTFGDQTDITWWKSHNLPLKTIITKKGTINFPHKLDIDGLTIKEARTKIIDILKEQSLLTKQEEIIQTVKCAERSGAPLEILTVTQWFIKTITHKEALLKRTNELNWYPKNMKMRLENWINSLSWDWCISRQRYFGVPFPIWYSKRIGEEGKILYADISQLPVDPLKDLPIGYSKEEVDPDLDVMDTWATSSVSPQLSTYGISEDLAINKVRHDKLFPMDLRPQAHEIIRTWAFYTILKSHLHQNILPWKNIMVSGWCLAEDRSKMSKSKGNVLVPEKLLERYGADVIRYWSANSKLGADTAYSEDVMKNGKRLVNKLWNAAKFVSIHFDKLTSEDKKVSLFDIKEKITNEFDQWMINKLVALVKLATNALQNYEYANAIYLTEKFFWSIFCDNYLEISKTRSYDEANKNPQGQYSSILTLYHIMQTLLKLFAPFMPHITEELYQILYNKNSIHMQGNWINYGDLNYEIDVQGPEGLLEILDIVRKFKAEYNLSIKAPIKLLEVSGIVLSTELVEDLKNVTSAEEIQFKAKDDQIKVNIKLFV.

The 'HIGH' region signature appears at 46–56 (PTVSGQLHIGH). A 'KMSKS' region motif is present at residues 536–540 (KMSKS). An ATP-binding site is contributed by K539.

This sequence belongs to the class-I aminoacyl-tRNA synthetase family. ValS type 2 subfamily. As to quaternary structure, monomer.

The protein resides in the cytoplasm. The enzyme catalyses tRNA(Val) + L-valine + ATP = L-valyl-tRNA(Val) + AMP + diphosphate. In terms of biological role, catalyzes the attachment of valine to tRNA(Val). As ValRS can inadvertently accommodate and process structurally similar amino acids such as threonine, to avoid such errors, it has a 'posttransfer' editing activity that hydrolyzes mischarged Thr-tRNA(Val) in a tRNA-dependent manner. The polypeptide is Valine--tRNA ligase (Rickettsia prowazekii (strain Madrid E)).